Here is a 421-residue protein sequence, read N- to C-terminus: Diaminopimelate decarboxylase (421 aa).

Lys-63 is modified (N6-(pyridoxal phosphate)lysine). Residues Gly-242 and 278-281 each bind pyridoxal 5'-phosphate; that span reads EPGR. Substrate contacts are provided by Arg-281, Arg-317, and Tyr-321. Cys-346 serves as the catalytic Proton donor. 2 residues coordinate substrate: Glu-347 and Tyr-375. Tyr-375 contacts pyridoxal 5'-phosphate.

It belongs to the Orn/Lys/Arg decarboxylase class-II family. LysA subfamily. As to quaternary structure, homodimer. Pyridoxal 5'-phosphate serves as cofactor.

It carries out the reaction meso-2,6-diaminopimelate + H(+) = L-lysine + CO2. The protein operates within amino-acid biosynthesis; L-lysine biosynthesis via DAP pathway; L-lysine from DL-2,6-diaminopimelate: step 1/1. Functionally, specifically catalyzes the decarboxylation of meso-diaminopimelate (meso-DAP) to L-lysine. The chain is Diaminopimelate decarboxylase from Zymomonas mobilis subsp. mobilis (strain ATCC 31821 / ZM4 / CP4).